Consider the following 366-residue polypeptide: Alcohol dehydrogenase (366 aa).

C41, H62, E63, and D167 together coordinate Zn(2+).

This sequence belongs to the zinc-containing alcohol dehydrogenase family. In terms of assembly, homotetramer. The cofactor is Zn(2+).

The catalysed reaction is a primary alcohol + NAD(+) = an aldehyde + NADH + H(+). It carries out the reaction a secondary alcohol + NAD(+) = a ketone + NADH + H(+). The enzyme catalyses (R,R)-butane-2,3-diol + NAD(+) = (R)-acetoin + NADH + H(+). It catalyses the reaction an aldehyde + NAD(+) + H2O = a carboxylate + NADH + 2 H(+). Functionally, multifunctional alcohol dehydrogenase exhibiting NAD(+)-dependent dehydrogenase activities for 2,3-butanediol, ethanol and acetaldehyde, and reductase activities for acetoin (NADH-dependent), and diacetyl and acetaldehyde (independently of whether NADH or NADPH is the reductant). The rate of oxidation of 2,3-butanediol is much higher than for the oxidation of ethanol. Has acetaldehyde dehydrogenase activity leading to acetate formation. May function in the release of excess reducing power in the absence of exogenous hydrogen acceptors such as oxygen. The protein is Alcohol dehydrogenase (adh) of Cupriavidus necator (Alcaligenes eutrophus).